Here is a 131-residue protein sequence, read N- to C-terminus: Holo-[acyl-carrier-protein] synthase (131 aa).

The Mg(2+) site is built by D8 and E59.

Belongs to the P-Pant transferase superfamily. AcpS family. Mg(2+) serves as cofactor.

The protein localises to the cytoplasm. The enzyme catalyses apo-[ACP] + CoA = holo-[ACP] + adenosine 3',5'-bisphosphate + H(+). Its function is as follows. Transfers the 4'-phosphopantetheine moiety from coenzyme A to a Ser of acyl-carrier-protein. This chain is Holo-[acyl-carrier-protein] synthase, found in Rickettsia africae (strain ESF-5).